The following is a 202-amino-acid chain: Large ribosomal subunit protein bL25 (202 aa).

Belongs to the bacterial ribosomal protein bL25 family. CTC subfamily. Part of the 50S ribosomal subunit; part of the 5S rRNA/L5/L18/L25 subcomplex. Contacts the 5S rRNA. Binds to the 5S rRNA independently of L5 and L18.

In terms of biological role, this is one of the proteins that binds to the 5S RNA in the ribosome where it forms part of the central protuberance. This is Large ribosomal subunit protein bL25 from Burkholderia ambifaria (strain MC40-6).